Reading from the N-terminus, the 131-residue chain is MSMSDPIADMLTRIRNAQMVEKVSVAMPSSKVKVAIAQVLKDEGYIDDFAVKTEGAKAELNIALKYYAGRPVIERLERVSKPGLRVYRGRNEIPQVMNGLGVAIVSTPKGVMTDRKARATGVGGEVICYVA.

It belongs to the universal ribosomal protein uS8 family. As to quaternary structure, part of the 30S ribosomal subunit. Contacts proteins S5 and S12.

In terms of biological role, one of the primary rRNA binding proteins, it binds directly to 16S rRNA central domain where it helps coordinate assembly of the platform of the 30S subunit. This is Small ribosomal subunit protein uS8 from Burkholderia multivorans (strain ATCC 17616 / 249).